Consider the following 514-residue polypeptide: HTH-type transcriptional regulatory protein TyrR (514 aa).

One can recognise an ACT domain in the interval 2-72 (RLEVFCEDRL…GVTDVRTVPW (71 aa)). The 43-residue stretch at 78–120 (EHLALSALLEALPEPVLSLDMKSKIEMANPASCQLFAHTQDRM) folds into the PAS domain. One can recognise a Sigma-54 factor interaction domain in the interval 206 to 428 (IIAVSAKMKH…VKNAIYRALT (223 aa)). ATP contacts are provided by residues 234–241 (GNTGTGKD) and 290–299 (ANGGSVLLDE). The H-T-H motif DNA-binding region spans 482–502 (STRKLAKRLGVSHTAIANKLR).

As to quaternary structure, homodimer. In presence of tyrosine (or high concentrations of phenylalanine or tryptophan) and ATP, it self-associates to form an hexamer.

The protein localises to the cytoplasm. In terms of biological role, dual transcriptional regulator of the TyrR regulon, which includes a number of genes coding for proteins involved in the biosynthesis or transport of the three aromatic amino acids, phenylalanine, tyrosine and tryptophan. These three aromatic amino acids act as effectors which bind to the TyrR protein to form an active regulatory protein. Acts by binding specifically to TyrR boxes in the promoter region of the target genes. The sequence is that of HTH-type transcriptional regulatory protein TyrR from Citrobacter braakii.